A 352-amino-acid chain; its full sequence is 3-isopropylmalate dehydrogenase (352 aa).

Arg-96, Arg-106, Arg-134, and Asp-220 together coordinate substrate. Mg(2+) is bound by residues Asp-220, Asp-244, and Asp-248. 277-289 (GSAPDIAGKNLAN) contacts NAD(+).

This sequence belongs to the isocitrate and isopropylmalate dehydrogenases family. LeuB type 1 subfamily. In terms of assembly, homodimer. Requires Mg(2+) as cofactor. It depends on Mn(2+) as a cofactor.

The protein resides in the cytoplasm. It carries out the reaction (2R,3S)-3-isopropylmalate + NAD(+) = 4-methyl-2-oxopentanoate + CO2 + NADH. The protein operates within amino-acid biosynthesis; L-leucine biosynthesis; L-leucine from 3-methyl-2-oxobutanoate: step 3/4. Its function is as follows. Catalyzes the oxidation of 3-carboxy-2-hydroxy-4-methylpentanoate (3-isopropylmalate) to 3-carboxy-4-methyl-2-oxopentanoate. The product decarboxylates to 4-methyl-2 oxopentanoate. The polypeptide is 3-isopropylmalate dehydrogenase (Desulfitobacterium hafniense (strain Y51)).